The following is a 188-amino-acid chain: MEKFKKAGKIASKVRKKAIKAVKGEMKILDLAEFIENEIEKMGAKPAFPCNISVNEITAHYSPPCNDDRKILPGDLVKIDIGVHVDGFIGDTATTVLVEGYEDLKNYNDELAEKNKKMIEAAESALENAINTIRDGVEIGKIGEVIENTINKFGFKPISNLTGHTIDRWVLHSGLSIPNVKGQNSHKL.

H60 lines the substrate pocket. A divalent metal cation-binding residues include D80, D91, and H164. H172 is a binding site for substrate.

This sequence belongs to the peptidase M24A family. Methionine aminopeptidase archaeal type 2 subfamily. Monomer. Requires Co(2+) as cofactor. Zn(2+) serves as cofactor. The cofactor is Mn(2+). It depends on Fe(2+) as a cofactor.

The enzyme catalyses Release of N-terminal amino acids, preferentially methionine, from peptides and arylamides.. Removes the N-terminal methionine from nascent proteins. The N-terminal methionine is often cleaved when the second residue in the primary sequence is small and uncharged (Met-Ala-, Cys, Gly, Pro, Ser, Thr, or Val). The protein is Methionine aminopeptidase (map) of Methanothermus fervidus.